The following is a 1771-amino-acid chain: MMIDNNCGKEKVWVPNPEKGWINGDLIKEIPGEGWLVRDENGKEIKIEKDELRMQNPVIQEGIDDMTSLSHLHEAAVIHNLIKRYEINSIYTYTGSILIAINPYTKLPIYSKEMIESFCDQPVSKLAPHVYSIAESAYREMLNFQKNQSILVSGESGAGKTETTKFLLQYFAAMGEKGNGVNTSLISEEDIVEGNNIETQVIKSTPILEAFGNSKTLRNDNSSRFGKFIEIHFDKIKGTIVGAKLETYLLEKSRIVKPPENERGYHIFYQLIKGFNNSCCLKNSSNNNKDEDSSSSSNNNIDDLKSLLKCKASDFNYLISSGCDSIDGVDDSQVFIKTENALKVMGLSNDELIGIYKILLSILHIGNIEFEKGKEEDSSIIKYGNSSFGESFSDDDAGGYNPLEISCKLLGCSVDSLKSTFCSRKMKAGNESYTINHTVEQASQARDSLSMFLYSRLFDWLVVRINQSIDKIGTEKKDNSFLFIGILDIYGFESFESNSYEQFTINYANEKLQNQFNHQIFKLEQLEYEKEKIDWSYIEFSDNQECIDLIEKKPLGILSILDEESQFPKSTPSTLCTKLYNNHSKSKNFEKPRFSQTHFIIDHYAGKVEYDTNLFLEKNKDFIISEQVSALESSNWKFLTNLFQILSKKMNGGGGTSGGGGAGGNKASSSAAGKSTFKFTSVSSQFKESLNSLMTTINSTNPHYIRCIKPNTEKRANLFDNVMVLHQLRCSGVIEQLRISRSGYPSRLVYDNFIKRYKLIVAKDFKNDDDSNESKEWNSILKETDLNSSNGGTNNQIELKRKGAELMINKLSIDISSVQFGLTKLFFKSGIIANLELLRSQTMINSATFIQKIWRGYTDRKAYTSTKHSSIYFQSLIRSYLQQLEYNSMVEENSAIHLQSLIRTNELEKQFNQLLSTTIHFQSLLRRLEDSKEFNTLMDRIKKIVKIQSLWRSNLAKKQLKLLKAEAKSLTNVVAEKNKLASKLGDIQSKLDMESQLAQKIKNENEQLSSQFSNIQIEKEKLQKDFGNINLEKEELLLKYSALESEYHQYKQQNELIISKLKQHINDLEEKQHQHSYKNNEVVGNTSFEGSTTTNNGVTSPPKSSPASPIRNSINSNSDTTISGSSDDSIDNTDSLILSPKQHKGEDRKRNHEISSISPPRSRETIGHDDDDNNVDVIPRRQFNELEKEYKELKQMDETHKQYIESLKLQITQLEEKVKKSSSHPRSLLPGIPSNINDSPKVVYTKSSITNDNSSSHHQQQQQQHNISPSNSITSTTSPINMMDSNIKSLSYKDFTNSQEIDAQQQLHQYHLNNGTNPATSTTNGSGNPLSQSSPTGSDKHIQQSTISDLVSALNFNNCQLESGKYLVDLIIKNHDSIVSKYVPSEMGGIPEPAFILSRCFLKNIYDVDATVIGTPNSTNSGGGSGTGVLDPIETNVNILIYFCDKVEEVIYRDPKSNCSALCYWFSNFYTLFNIMETYNQDTKDQLSLNDQDKALIEKLKITLQTMIVKAHKNVVKNITDYIQPILHKSLNDTTSEIDFMDPITNYLNQIQISLSLENCYINNNLCKLLFEQLFSFINAMIFNEILLRKDLCCLRSSIPIKMNISELEHWVKLHHGKEWSSSVCDKLRLLKEVVYILMIDKTQLQNDELRDEICPTLSIAQLKQLLTMYSPDVDSFEDPIPLEILTSLMDSPKYNPDENILLDLSKIFTLKFINSNQTLSSSTSSENDLMATINLNALESVQYACDDLVSNIVKKNIEIVSLNNQKSIKK.

A Myosin N-terminal SH3-like domain is found at 7 to 57; sequence CGKEKVWVPNPEKGWINGDLIKEIPGEGWLVRDENGKEIKIEKDELRMQNP. One can recognise a Myosin motor domain in the interval 61 to 840; it reads EGIDDMTSLS…IIANLELLRS (780 aa). ATP is bound at residue 154-161; it reads GESGAGKT. Residues 690–712 form an actin-binding region; sequence LNSLMTTINSTNPHYIRCIKPNT. IQ domains lie at 843-872, 866-895, and 940-969; these read MINS…SSIY, TKHS…ENSA, and RIKK…EAKS. 3 disordered regions span residues 1070 to 1176, 1218 to 1282, and 1312 to 1343; these read EKQH…NNVD, VKKS…PINM, and LNNG…KHIQ. Residues 1077 to 1111 show a composition bias toward polar residues; sequence YKNNEVVGNTSFEGSTTTNNGVTSPPKSSPASPIR. Residues 1112 to 1139 show a composition bias toward low complexity; sequence NSINSNSDTTISGSSDDSIDNTDSLILS. The segment covering 1143-1153 has biased composition (basic and acidic residues); that stretch reads HKGEDRKRNHE. Positions 1180–1224 form a coiled coil; sequence RRQFNELEKEYKELKQMDETHKQYIESLKLQITQLEEKVKKSSSH. Over residues 1253–1281 the composition is skewed to low complexity; it reads NSSSHHQQQQQQHNISPSNSITSTTSPIN. The 269-residue stretch at 1427–1695 folds into the Dilute domain; it reads TGVLDPIETN…LTSLMDSPKY (269 aa).

The protein belongs to the TRAFAC class myosin-kinesin ATPase superfamily. Myosin family. As to quaternary structure, myosin I heavy chain is single-headed. Dimer of a heavy and a light chain. Inability to self-assemble into filaments.

Functionally, myosin is a protein that binds to actin and has ATPase activity that is activated by actin. This Dictyostelium discoideum (Social amoeba) protein is Myosin-H heavy chain (myoH).